The sequence spans 388 residues: Ovalbumin-related protein Y (388 aa).

A disulfide bond links cysteine 74 and cysteine 121. 4 N-linked (GlcNAc...) asparagine glycosylation sites follow: asparagine 95, asparagine 215, asparagine 293, and asparagine 312.

It belongs to the serpin family. Ov-serpin subfamily. Post-translationally, N-glycosylated on at least two Asn residues by ovomucoid type carbohydrate units. The N-terminus is blocked. Major protein of egg white. Expressed in the magnum of the oviduct (at protein level).

The protein localises to the secreted. The sequence is that of Ovalbumin-related protein Y (SERPINB14B) from Gallus gallus (Chicken).